The sequence spans 108 residues: Parvalbumin beta (108 aa).

A1 carries the post-translational modification N-acetylalanine. EF-hand domains are found at residues 38–73 (KSNEELEAIFKILDQDKSGFIEDEELELFLQNFSAG) and 77–108 (LTKTETETFLKAGDSDGDGKIGVDEFQKLVKA). Residues D51, D53, S55, F57, E59, E62, D90, D92, D94, K96, and E101 each contribute to the Ca(2+) site.

The protein belongs to the parvalbumin family.

In muscle, parvalbumin is thought to be involved in relaxation after contraction. It binds two calcium ions. The protein is Parvalbumin beta of Latimeria chalumnae (Coelacanth).